The chain runs to 200 residues: MTTPAAPRLRIGVMGGTFDPIHNGHLVAASEVQQHLQLDEVIFVPTGQPWQKQTVTDGEHRYLMTVIATAANPRFTVSRVDIDRAGTTYTIDTLRDIRRTHPDAELFFITGADAIQQILGWKDVAELWDLAHFVAVTRPGHDLTESGLPHADVRLLEVPALAISSTDCRARVGRGFPVWYLVPDGVVQYISKHHLYRSPQ.

The protein belongs to the NadD family.

The enzyme catalyses nicotinate beta-D-ribonucleotide + ATP + H(+) = deamido-NAD(+) + diphosphate. It functions in the pathway cofactor biosynthesis; NAD(+) biosynthesis; deamido-NAD(+) from nicotinate D-ribonucleotide: step 1/1. Its function is as follows. Catalyzes the reversible adenylation of nicotinate mononucleotide (NaMN) to nicotinic acid adenine dinucleotide (NaAD). The chain is Probable nicotinate-nucleotide adenylyltransferase from Clavibacter michiganensis subsp. michiganensis (strain NCPPB 382).